Here is a 439-residue protein sequence, read N- to C-terminus: uncharacterized protein (439 aa).

Positions 273–439 (PIIILLDHSG…EARKIYKSIS (167 aa)) constitute a VWFA domain.

This is an uncharacterized protein from Methanocaldococcus jannaschii (strain ATCC 43067 / DSM 2661 / JAL-1 / JCM 10045 / NBRC 100440) (Methanococcus jannaschii).